Here is a 204-residue protein sequence, read N- to C-terminus: Imidazoleglycerol-phosphate dehydratase (204 aa).

The protein belongs to the imidazoleglycerol-phosphate dehydratase family.

The protein resides in the cytoplasm. It catalyses the reaction D-erythro-1-(imidazol-4-yl)glycerol 3-phosphate = 3-(imidazol-4-yl)-2-oxopropyl phosphate + H2O. It participates in amino-acid biosynthesis; L-histidine biosynthesis; L-histidine from 5-phospho-alpha-D-ribose 1-diphosphate: step 6/9. The protein is Imidazoleglycerol-phosphate dehydratase of Rhodococcus jostii (strain RHA1).